Consider the following 108-residue polypeptide: Curli assembly protein CsgC (108 aa).

The N-terminal stretch at 1–8 is a signal peptide; sequence MHTLLLLA.

The protein belongs to the CsgC/AgfC family.

It localises to the periplasm. Functionally, plays a role in the extracellular assembly of CsgA into thin aggregative fimbriae (Tafi) fibers. Assembly may also require CsgE. Tafi are thought to be assembled via an extracellular nucleation-precipitation (ENP) pathway, and possibly also via an intracellular non-CsgC-dependent pathway. The polypeptide is Curli assembly protein CsgC (Salmonella arizonae (strain ATCC BAA-731 / CDC346-86 / RSK2980)).